An 898-amino-acid chain; its full sequence is Chitin synthase 1 (898 aa).

Residues 1–154 (MDPRYGAQPM…PPQQGGGIQR (154 aa)) form a disordered region. Pro residues predominate over residues 9–21 (PMPPRRSPSPGHP). 2 stretches are compositionally biased toward polar residues: residues 64 to 75 (DHLSLNAAQSVD) and 136 to 146 (DVPSEQYQDPP). 5 helical membrane passes run 441-461 (SAFG…YVAL), 540-560 (RWLN…LDFL), 570-590 (FAFF…WFAI), 616-636 (ILGV…FVLS), and 651-671 (MCWF…FISV). A glycan (N-linked (GlcNAc...) asparagine) is linked at N685. A run of 4 helical transmembrane segments spans residues 697–717 (MLII…LIML), 726–746 (FAQY…YAFC), 825–845 (GVVL…LSSA), and 870–890 (IVLW…MWFL).

Belongs to the chitin synthase family. Class I subfamily.

The protein resides in the cell membrane. The catalysed reaction is [(1-&gt;4)-N-acetyl-beta-D-glucosaminyl](n) + UDP-N-acetyl-alpha-D-glucosamine = [(1-&gt;4)-N-acetyl-beta-D-glucosaminyl](n+1) + UDP + H(+). Its function is as follows. Polymerizes chitin, a structural polymer of the cell wall and septum, by transferring the sugar moiety of UDP-GlcNAc to the non-reducing end of the growing chitin polymer. Shows additive effects in septum formation with CHS2, CHS3A, CHS4, CHS5, CHS6 and CHS7. Regulates mycelial growth and conidiation. Involved in virulence and mediates mycotoxin deoxinivalenol (DON) biosynthesis via the regulation of the expression of TRI4, TRI5 and TRI6. This is Chitin synthase 1 from Gibberella zeae (strain ATCC MYA-4620 / CBS 123657 / FGSC 9075 / NRRL 31084 / PH-1) (Wheat head blight fungus).